A 405-amino-acid chain; its full sequence is Imidazolonepropionase (405 aa).

Residues His-73 and His-75 each contribute to the Fe(3+) site. Residues His-73 and His-75 each contribute to the Zn(2+) site. Residues Arg-82, Tyr-145, and His-178 each contribute to the 4-imidazolone-5-propanoate site. Residue Tyr-145 participates in N-formimidoyl-L-glutamate binding. Position 243 (His-243) interacts with Fe(3+). His-243 serves as a coordination point for Zn(2+). Gln-246 is a binding site for 4-imidazolone-5-propanoate. Asp-318 contributes to the Fe(3+) binding site. Asp-318 lines the Zn(2+) pocket. N-formimidoyl-L-glutamate is bound by residues Asn-320 and Gly-322. A 4-imidazolone-5-propanoate-binding site is contributed by Thr-323.

This sequence belongs to the metallo-dependent hydrolases superfamily. HutI family. It depends on Zn(2+) as a cofactor. Fe(3+) serves as cofactor.

The protein resides in the cytoplasm. It catalyses the reaction 4-imidazolone-5-propanoate + H2O = N-formimidoyl-L-glutamate. The protein operates within amino-acid degradation; L-histidine degradation into L-glutamate; N-formimidoyl-L-glutamate from L-histidine: step 3/3. Its function is as follows. Catalyzes the hydrolytic cleavage of the carbon-nitrogen bond in imidazolone-5-propanoate to yield N-formimidoyl-L-glutamate. It is the third step in the universal histidine degradation pathway. The chain is Imidazolonepropionase from Brucella suis (strain ATCC 23445 / NCTC 10510).